We begin with the raw amino-acid sequence, 236 residues long: LexA repressor (236 aa).

The segment at residues Phe-26–Thr-46 is a DNA-binding region (H-T-H motif). The interval Ser-84–Asp-107 is disordered. Residues Ser-157 and Lys-195 each act as for autocatalytic cleavage activity in the active site.

It belongs to the peptidase S24 family. Homodimer.

The catalysed reaction is Hydrolysis of Ala-|-Gly bond in repressor LexA.. Functionally, represses a number of genes involved in the response to DNA damage (SOS response), including recA and lexA. In the presence of single-stranded DNA, RecA interacts with LexA causing an autocatalytic cleavage which disrupts the DNA-binding part of LexA, leading to derepression of the SOS regulon and eventually DNA repair. The polypeptide is LexA repressor (Chelativorans sp. (strain BNC1)).